Consider the following 182-residue polypeptide: Small ribosomal subunit protein uS4c (182 aa).

The disordered stretch occupies residues glycine 13 to arginine 34. In terms of domain architecture, S4 RNA-binding spans methionine 82–asparagine 143.

The protein belongs to the universal ribosomal protein uS4 family. In terms of assembly, part of the 30S ribosomal subunit. Contacts protein S5. The interaction surface between S4 and S5 is involved in control of translational fidelity.

It localises to the plastid. The protein resides in the chloroplast. In terms of biological role, one of the primary rRNA binding proteins, it binds directly to 16S rRNA where it nucleates assembly of the body of the 30S subunit. Functionally, with S5 and S12 plays an important role in translational accuracy. In Iris lutescens (Crimean iris), this protein is Small ribosomal subunit protein uS4c (rps4).